Reading from the N-terminus, the 1872-residue chain is Ral GTPase-activating protein subunit alpha-2 (1872 aa).

3 positions are modified to phosphoserine: serine 373, serine 376, and serine 379. Basic and acidic residues predominate over residues 446-469 (DKKDVAEEDADKLGLSETDSKEVS). Positions 446-481 (DKKDVAEEDADKLGLSETDSKEVSSESSGHKRSSSW) are disordered. Phosphoserine is present on residues serine 486 and serine 696. 2 disordered regions span residues 711-730 (FRSA…NTVR) and 758-849 (QPVP…TGSD). Threonine 715 bears the Phosphothreonine; by PKB mark. Over residues 775-795 (SDSSQGQKVENSQNLSSSEPK) the composition is skewed to polar residues. Over residues 796 to 810 (SVQESKGHVTHEHEG) the composition is skewed to basic and acidic residues. Phosphoserine occurs at positions 819 and 820. The segment covering 824 to 843 (LDLKEESQQTHGRCRERQKS) has biased composition (basic and acidic residues). Serine 1592 carries the post-translational modification Phosphoserine. Residues 1634–1842 (LKNLDSRQCR…EERALYLEAI (209 aa)) enclose the Rap-GAP domain.

As to quaternary structure, component of the heterodimeric RalGAP2 complex with RALGAPB. Heterodimerization is required for activity. In terms of tissue distribution, highly expressed in lung, liver, testis and thymus with lower levels in brain and heart (at protein level).

Its subcellular location is the cytoplasm. Its function is as follows. Catalytic subunit of the heterodimeric RalGAP2 complex which acts as a GTPase activator for the Ras-like small GTPases RALA and RALB. This chain is Ral GTPase-activating protein subunit alpha-2, found in Rattus norvegicus (Rat).